The sequence spans 103 residues: uncharacterized protein (103 aa).

This is an uncharacterized protein from Haemophilus influenzae (strain ATCC 51907 / DSM 11121 / KW20 / Rd).